The following is a 368-amino-acid chain: Phospho-N-acetylmuramoyl-pentapeptide-transferase (368 aa).

The next 9 helical transmembrane spans lie at 30–50 (AAAITSLLITLLAGPGFIRYL), 72–92 (LPTMGGLLIIFSIEVSVLLWS), 98–118 (HVWLIMLAVLWMGVVGFIDDY), 139–159 (VALGLVVGIYTSLDPAFSVLM), 170–190 (LTIDYGYFYIPVVIFIITALS), 208–228 (AIVVFALGGFAYLAGNAVYAT), 238–258 (GGEIAVVCMAIVMASVGFLWF), 264–286 (EIFMGDTGSLALGSAIAVIALLI), and 345–365 (KIVIRFWIITILFFLTSLMTL).

The protein belongs to the glycosyltransferase 4 family. MraY subfamily. Requires Mg(2+) as cofactor.

The protein resides in the cell inner membrane. The enzyme catalyses UDP-N-acetyl-alpha-D-muramoyl-L-alanyl-gamma-D-glutamyl-meso-2,6-diaminopimeloyl-D-alanyl-D-alanine + di-trans,octa-cis-undecaprenyl phosphate = di-trans,octa-cis-undecaprenyl diphospho-N-acetyl-alpha-D-muramoyl-L-alanyl-D-glutamyl-meso-2,6-diaminopimeloyl-D-alanyl-D-alanine + UMP. It functions in the pathway cell wall biogenesis; peptidoglycan biosynthesis. Its function is as follows. Catalyzes the initial step of the lipid cycle reactions in the biosynthesis of the cell wall peptidoglycan: transfers peptidoglycan precursor phospho-MurNAc-pentapeptide from UDP-MurNAc-pentapeptide onto the lipid carrier undecaprenyl phosphate, yielding undecaprenyl-pyrophosphoryl-MurNAc-pentapeptide, known as lipid I. This is Phospho-N-acetylmuramoyl-pentapeptide-transferase from Chlorobium luteolum (strain DSM 273 / BCRC 81028 / 2530) (Pelodictyon luteolum).